Reading from the N-terminus, the 59-residue chain is Embryonic testis differentiation protein (59 aa).

The interval 1–28 is disordered; that stretch reads MDEKNPEAVPRPPEQNTELVPPKKSKSK.

In terms of tissue distribution, specifically expressed in testis.

In Mus musculus (Mouse), this protein is Embryonic testis differentiation protein.